A 189-amino-acid polypeptide reads, in one-letter code: Protein seele (189 aa).

A signal peptide spans 1–17; sequence MLTKALILFGLLALAQG. A Saposin B-type domain is found at 23–176; the sequence is REVKCHVCKA…EQASYCDESP (154 aa). 3 disulfides stabilise this stretch: C27–C172, C30–C165, and C85–C136. The Prevents secretion from ER motif lies at 186-189; the sequence is KEEL.

This sequence belongs to the canopy family.

It is found in the endoplasmic reticulum. In terms of biological role, involved in embryonic dorsal-ventral patterning which is generated by a series of serine protease processing events where gd processes snk which cleaves ea which then processes spz into the activating ligand for the Toll receptor. Required during this process for the secretion of ea from the developing embryo into the perivitelline space and for ea processing. The sequence is that of Protein seele from Drosophila melanogaster (Fruit fly).